We begin with the raw amino-acid sequence, 942 residues long: Isoleucine--tRNA ligase (942 aa).

The short motif at 58–68 (PYANGDIHLGH) is the 'HIGH' region element. E567 serves as a coordination point for L-isoleucyl-5'-AMP. The short motif at 608–612 (KMSKS) is the 'KMSKS' region element. Position 611 (K611) interacts with ATP. Zn(2+) is bound by residues C905, C908, C925, and C928.

Belongs to the class-I aminoacyl-tRNA synthetase family. IleS type 1 subfamily. In terms of assembly, monomer. Zn(2+) is required as a cofactor.

The protein resides in the cytoplasm. It catalyses the reaction tRNA(Ile) + L-isoleucine + ATP = L-isoleucyl-tRNA(Ile) + AMP + diphosphate. Its function is as follows. Catalyzes the attachment of isoleucine to tRNA(Ile). As IleRS can inadvertently accommodate and process structurally similar amino acids such as valine, to avoid such errors it has two additional distinct tRNA(Ile)-dependent editing activities. One activity is designated as 'pretransfer' editing and involves the hydrolysis of activated Val-AMP. The other activity is designated 'posttransfer' editing and involves deacylation of mischarged Val-tRNA(Ile). In Pseudoalteromonas translucida (strain TAC 125), this protein is Isoleucine--tRNA ligase.